A 125-amino-acid polypeptide reads, in one-letter code: Putative superoxide reductase (125 aa).

6 residues coordinate Fe cation: Glu-12, His-14, His-40, His-46, Cys-110, and His-113.

It belongs to the desulfoferrodoxin family. The cofactor is Fe cation.

The catalysed reaction is reduced [rubredoxin] + superoxide + 2 H(+) = oxidized [rubredoxin] + H2O2. Functionally, uses electrons from reduced NADP, by way of rubredoxin and an oxidoreductase, to catalyze the reduction of superoxide to hydrogen peroxide. The chain is Putative superoxide reductase from Archaeoglobus fulgidus (strain ATCC 49558 / DSM 4304 / JCM 9628 / NBRC 100126 / VC-16).